Here is a 426-residue protein sequence, read N- to C-terminus: Histidine--tRNA ligase (426 aa).

The protein belongs to the class-II aminoacyl-tRNA synthetase family. As to quaternary structure, homodimer.

Its subcellular location is the cytoplasm. It catalyses the reaction tRNA(His) + L-histidine + ATP = L-histidyl-tRNA(His) + AMP + diphosphate + H(+). This is Histidine--tRNA ligase from Streptococcus thermophilus (strain ATCC BAA-491 / LMD-9).